Consider the following 210-residue polypeptide: Urease accessory protein UreG (210 aa).

14–21 (GPVGSGKT) contacts GTP.

This sequence belongs to the SIMIBI class G3E GTPase family. UreG subfamily. As to quaternary structure, homodimer. UreD, UreF and UreG form a complex that acts as a GTP-hydrolysis-dependent molecular chaperone, activating the urease apoprotein by helping to assemble the nickel containing metallocenter of UreC. The UreE protein probably delivers the nickel.

It is found in the cytoplasm. Functionally, facilitates the functional incorporation of the urease nickel metallocenter. This process requires GTP hydrolysis, probably effectuated by UreG. The sequence is that of Urease accessory protein UreG from Rhodopseudomonas palustris (strain BisA53).